A 339-amino-acid polypeptide reads, in one-letter code: Heat-inducible transcription repressor HrcA (339 aa).

The protein belongs to the HrcA family.

Negative regulator of class I heat shock genes (grpE-dnaK-dnaJ and groELS operons). Prevents heat-shock induction of these operons. This is Heat-inducible transcription repressor HrcA from Clostridioides difficile (strain 630) (Peptoclostridium difficile).